The primary structure comprises 174 residues: Austinoid biosynthesis clusters protein H (174 aa).

It belongs to the trt14 isomerase family. In terms of assembly, homodimer.

The protein operates within secondary metabolite biosynthesis; terpenoid biosynthesis. Its function is as follows. Part of the gene cluster B that mediates the biosynthesis of austinol and dehydroaustinol, two fungal meroterpenoids. The first step of the pathway is the synthesis of 3,5-dimethylorsellinic acid by the polyketide synthase ausA. 3,5-dimethylorsellinic acid is then prenylated by the polyprenyl transferase ausN. Further epoxidation by the FAD-dependent monooxygenase ausM and cyclization by the probable terpene cyclase ausL lead to the formation of protoaustinoid A. Protoaustinoid A is then oxidized to spiro-lactone preaustinoid A3 by the combined action of the FAD-binding monooxygenases ausB and ausC, and the dioxygenase ausE. Acid-catalyzed keto-rearrangement and ring contraction of the tetraketide portion of preaustinoid A3 by ausJ lead to the formation of preaustinoid A4. The aldo-keto reductase ausK, with the help of ausH, is involved in the next step by transforming preaustinoid A4 into isoaustinone which is in turn hydroxylated by the P450 monooxygenase ausI to form austinolide. Finally, the cytochrome P450 monooxygenase ausG modifies austinolide to austinol. Austinol can be further modified to dehydroaustinol which forms a diffusible complex with diorcinol that initiates conidiation. Due to genetic rearrangements of the clusters and the subsequent loss of some enzymes, the end products of the Emericella nidulans austinoid biosynthesis clusters are austinol and dehydroaustinol, even if additional enzymes, such as the O-acetyltransferase ausQ and the cytochrome P450 monooxygenase ausR are still functional. The polypeptide is Austinoid biosynthesis clusters protein H (Emericella nidulans (strain FGSC A4 / ATCC 38163 / CBS 112.46 / NRRL 194 / M139) (Aspergillus nidulans)).